Consider the following 280-residue polypeptide: 2-dehydro-3-deoxyphosphooctonate aldolase (280 aa).

It belongs to the KdsA family.

The protein localises to the cytoplasm. The enzyme catalyses D-arabinose 5-phosphate + phosphoenolpyruvate + H2O = 3-deoxy-alpha-D-manno-2-octulosonate-8-phosphate + phosphate. It functions in the pathway carbohydrate biosynthesis; 3-deoxy-D-manno-octulosonate biosynthesis; 3-deoxy-D-manno-octulosonate from D-ribulose 5-phosphate: step 2/3. The protein operates within bacterial outer membrane biogenesis; lipopolysaccharide biosynthesis. The protein is 2-dehydro-3-deoxyphosphooctonate aldolase of Neisseria gonorrhoeae (strain NCCP11945).